The primary structure comprises 739 residues: Catalase-peroxidase (739 aa).

The N-terminal stretch at 1–23 (MLKKIVTALGMSGMLLASNSAIA) is a signal peptide. The segment at residues 100-221 (WHDAGTYRIY…YAATQMGLIY (122 aa)) is a cross-link (tryptophyl-tyrosyl-methioninium (Trp-Tyr) (with M-247)). The active-site Proton acceptor is the H101. The tryptophyl-tyrosyl-methioninium (Tyr-Met) (with W-100) cross-link spans 221-247 (YVNPEGPDGKPDIKGAASEIRQAFRAM). H262 is a binding site for heme b.

Belongs to the peroxidase family. Peroxidase/catalase subfamily. Homodimer or homotetramer. Heme b is required as a cofactor. Post-translationally, formation of the three residue Trp-Tyr-Met cross-link is important for the catalase, but not the peroxidase activity of the enzyme.

It catalyses the reaction H2O2 + AH2 = A + 2 H2O. The enzyme catalyses 2 H2O2 = O2 + 2 H2O. In terms of biological role, bifunctional enzyme with both catalase and broad-spectrum peroxidase activity. The chain is Catalase-peroxidase from Francisella tularensis subsp. novicida (strain U112).